Here is a 500-residue protein sequence, read N- to C-terminus: NAD(P)H-quinone oxidoreductase chain 4, chloroplastic (500 aa).

Helical transmembrane passes span 4-24 (FPWL…LFFL), 31-51 (LIKW…TYAF), 87-107 (IGPI…AWPV), 113-130 (LFHF…GSFS), 134-154 (LLLF…LLSM), 167-187 (FILY…GLGL), 208-228 (ALEI…SPII), 242-262 (HYST…YGLV), 272-292 (AHSI…IYAA), 305-325 (IAYS…SITD), 330-350 (GAIL…FLAG), 386-406 (LALP…GIIT), 416-436 (ILIT…SLSM), and 462-482 (LFVS…PDFV).

It belongs to the complex I subunit 4 family.

The protein resides in the plastid. It localises to the chloroplast thylakoid membrane. The catalysed reaction is a plastoquinone + NADH + (n+1) H(+)(in) = a plastoquinol + NAD(+) + n H(+)(out). It catalyses the reaction a plastoquinone + NADPH + (n+1) H(+)(in) = a plastoquinol + NADP(+) + n H(+)(out). The chain is NAD(P)H-quinone oxidoreductase chain 4, chloroplastic from Gossypium barbadense (Sea Island cotton).